The sequence spans 286 residues: tRNA (guanine-N(7)-)-methyltransferase (286 aa).

Residues Gly-91, 114–115, 158–159, and Leu-178 contribute to the S-adenosyl-L-methionine site; these read EI and NS. Asp-181 is an active-site residue. An S-adenosyl-L-methionine-binding site is contributed by 256-258; sequence TEE.

Belongs to the class I-like SAM-binding methyltransferase superfamily. TrmB family. As to quaternary structure, forms a complex with TRM82.

Its subcellular location is the nucleus. The catalysed reaction is guanosine(46) in tRNA + S-adenosyl-L-methionine = N(7)-methylguanosine(46) in tRNA + S-adenosyl-L-homocysteine. It functions in the pathway tRNA modification; N(7)-methylguanine-tRNA biosynthesis. In terms of biological role, catalyzes the formation of N(7)-methylguanine at position 46 (m7G46) in tRNA. This chain is tRNA (guanine-N(7)-)-methyltransferase, found in Cryptococcus neoformans var. neoformans serotype D (strain B-3501A) (Filobasidiella neoformans).